Here is a 343-residue protein sequence, read N- to C-terminus: MGGRMPFNQSFWEEFLMGREGRLPTLPEISHVSKRVVRILGGNPGSMHLQGTNTYLVGTGRSRILIDTAQVKQASFLRLQRAPSQLIHSKKGLPVWISRISSFLRTHNLELSYVLLTHWHGDHTGGVPDLLAHSPSLADKIYKNCPDAGQNPITDGQIFSVNGATVRAVFTPGHSVDHMCFQLEEENALFTGDNVLGHGFSVAQDLGRYMHSLGDMASLGCGIGYPAHGAVIGNLPEKLEEYMKHREGRERMMLSTLTREQAQGEGGRVGETKGGLTLNEIVIAMYGRVPQEVVEKALAPSLLQVLWKLAEDRRVGFKPGDPLKRRWFALDQRKRNRVRGYPS.

The Zn(2+) site is built by His-118, His-120, Asp-122, and His-123. Asp-122 (proton donor/acceptor) is an active-site residue.

The protein belongs to the metallo-beta-lactamase superfamily. The cofactor is Zn(2+).

Its pathway is secondary metabolite biosynthesis. Its function is as follows. Lactamase-like protein; part of the gene cluster that mediates the biosynthesis of neosartoricin B, a prenylated anthracenone that probably exhibits T-cell antiproliferative activity, suggestive of a physiological role as an immunosuppressive agent. The non-reducing polyketide synthase nscA probably synthesizes and cyclizes the decaketide backbone. The hydrolase nscB then mediates the product release through hydrolysis followed by spontaneous decarboxylation. The prenyltransferase nscD catalyzes the addition of the dimethylallyl group to the aromatic C5. The FAD-dependent monooxygenase nscC is then responsible for the stereospecific hydroxylation at C2. Neosartoricin B can be converted into two additional compounds neosartoricins C and D. Neosartoricin C is a spirocyclic compound that is cyclized through the attack of C3 hydroxyl on C14, followed by dehydration. On the other hand, neosartoricin D is a further cyclized compound in which attack of C2 on C14 in neosartoricin C results in the formation of the acetal-containing dioxabicyclo-octanone ring. Both of these compounds are novel and possibly represent related metabolites of the gene cluster. The sequence is that of Lactamase-like protein nscB from Arthroderma otae (strain ATCC MYA-4605 / CBS 113480) (Microsporum canis).